Reading from the N-terminus, the 547-residue chain is Chaperonin GroEL (547 aa).

ATP-binding positions include 30–33 (TLGP), Lys51, 87–91 (DGTTT), Gly415, 479–481 (NAA), and Asp495.

It belongs to the chaperonin (HSP60) family. As to quaternary structure, forms a cylinder of 14 subunits composed of two heptameric rings stacked back-to-back. Interacts with the co-chaperonin GroES.

Its subcellular location is the cytoplasm. It catalyses the reaction ATP + H2O + a folded polypeptide = ADP + phosphate + an unfolded polypeptide.. Functionally, together with its co-chaperonin GroES, plays an essential role in assisting protein folding. The GroEL-GroES system forms a nano-cage that allows encapsulation of the non-native substrate proteins and provides a physical environment optimized to promote and accelerate protein folding. This Marinomonas sp. (strain MWYL1) protein is Chaperonin GroEL.